We begin with the raw amino-acid sequence, 323 residues long: Ribose-phosphate pyrophosphokinase 2 (323 aa).

Residues 43–45 (DGE) and 102–103 (RQ) contribute to the ATP site. Mg(2+) is bound by residues His136 and Asp177. Residue Lys200 is part of the active site. D-ribose 5-phosphate contacts are provided by residues Arg202, Asp226, and 230–234 (DTAGT).

It belongs to the ribose-phosphate pyrophosphokinase family. Class I subfamily. Homohexamer. The cofactor is Mg(2+).

Its subcellular location is the cytoplasm. The enzyme catalyses D-ribose 5-phosphate + ATP = 5-phospho-alpha-D-ribose 1-diphosphate + AMP + H(+). It participates in metabolic intermediate biosynthesis; 5-phospho-alpha-D-ribose 1-diphosphate biosynthesis; 5-phospho-alpha-D-ribose 1-diphosphate from D-ribose 5-phosphate (route I): step 1/1. Its function is as follows. Involved in the biosynthesis of the central metabolite phospho-alpha-D-ribosyl-1-pyrophosphate (PRPP) via the transfer of pyrophosphoryl group from ATP to 1-hydroxyl of ribose-5-phosphate (Rib-5-P). This chain is Ribose-phosphate pyrophosphokinase 2, found in Enterococcus faecalis (strain ATCC 700802 / V583).